The sequence spans 333 residues: uncharacterized protein (333 aa).

Residues 94-122 (NLYREVWRELEEEQNKVEKLREYILKLDS) are a coiled coil.

This is an uncharacterized protein from Aquifex aeolicus (strain VF5).